A 336-amino-acid polypeptide reads, in one-letter code: Vacuolar protein sorting-associated protein 26B (336 aa).

Residues S302, S304, and S319 each carry the phosphoserine modification.

It belongs to the VPS26 family. As to quaternary structure, component of the heterotrimeric retromer cargo-selective complex (CSC), also described as vacuolar protein sorting subcomplex (VPS), formed by VPS26 (VPS26A or VPS26B), VPS29 and VPS35. The CSC has a highly elongated structure with VPS26 and VPS29 binding independently at opposite distal ends of VPS35 as central platform. The CSC is believed to associate with variable sorting nexins to form functionally distinct retromer complex variants. The originally described SNX-BAR retromer is a pentamer containing the CSC and a heterodimeric membrane-deforming subcomplex formed between SNX1 or SNX2 and SNX5 or SNX6 (also called SNX-BAR subcomplex); the respective CSC and SNX-BAR subcomplexes associate with low affinity. The CSC associates with SNX3 to form a SNX3-retromer complex. The CSC associates with SNX27, the WASH complex and the SNX-BAR subcomplex to form the SNX27-retromer complex. Interacts with VPS29, VPS35, TBC1D5, GOLPH3, SNX27. In terms of tissue distribution, ubiquitously expressed in developing embryo and adult. Highly expressed in brain.

The protein resides in the cytoplasm. It is found in the membrane. Its subcellular location is the early endosome. It localises to the late endosome. Its function is as follows. Acts as a component of the retromer cargo-selective complex (CSC). The CSC is believed to be the core functional component of retromer or respective retromer complex variants acting to prevent missorting of selected transmembrane cargo proteins into the lysosomal degradation pathway. The recruitment of the CSC to the endosomal membrane involves RAB7A and SNX3. The SNX-BAR retromer mediates retrograde transport of cargo proteins from endosomes to the trans-Golgi network (TGN) and is involved in endosome-to-plasma membrane transport for cargo protein recycling. The SNX3-retromer mediates the retrograde transport of WLS distinct from the SNX-BAR retromer pathway. The SNX27-retromer is believed to be involved in endosome-to-plasma membrane trafficking and recycling of a broad spectrum of cargo proteins. The CSC seems to act as recruitment hub for other proteins, such as the WASH complex and TBC1D5. May be involved in retrograde transport of SORT1 but not of IGF2R. Acts redundantly with VSP26A in SNX-27 mediated endocytic recycling of SLC2A1/GLUT1. In Mus musculus (Mouse), this protein is Vacuolar protein sorting-associated protein 26B (Vps26b).